The following is a 233-amino-acid chain: Coenzyme Q-binding protein COQ10 homolog, mitochondrial (233 aa).

The transit peptide at 1–34 directs the protein to the mitochondrion; the sequence is MAEKATSLFLRAMEISEKQSFDVMRRNSSCTIRH.

This sequence belongs to the COQ10 family. As to quaternary structure, interacts with coenzyme Q.

The protein resides in the mitochondrion inner membrane. Its function is as follows. Required for the function of coenzyme Q in the respiratory chain. May serve as a chaperone or may be involved in the transport of Q6 from its site of synthesis to the catalytic sites of the respiratory complexes. The chain is Coenzyme Q-binding protein COQ10 homolog, mitochondrial from Danio rerio (Zebrafish).